The following is a 156-amino-acid chain: Transcription elongation factor GreA (156 aa).

Positions 44-67 (ENAEYEAAKEKQAMIEGRIQDLCQ) form a coiled coil.

It belongs to the GreA/GreB family.

In terms of biological role, necessary for efficient RNA polymerase transcription elongation past template-encoded arresting sites. The arresting sites in DNA have the property of trapping a certain fraction of elongating RNA polymerases that pass through, resulting in locked ternary complexes. Cleavage of the nascent transcript by cleavage factors such as GreA or GreB allows the resumption of elongation from the new 3'terminus. GreA releases sequences of 2 to 3 nucleotides. In Syntrophobacter fumaroxidans (strain DSM 10017 / MPOB), this protein is Transcription elongation factor GreA.